A 356-amino-acid polypeptide reads, in one-letter code: Protein RecA (356 aa).

69–76 lines the ATP pocket; that stretch reads GPESSGKT.

The protein belongs to the RecA family.

It is found in the cytoplasm. Can catalyze the hydrolysis of ATP in the presence of single-stranded DNA, the ATP-dependent uptake of single-stranded DNA by duplex DNA, and the ATP-dependent hybridization of homologous single-stranded DNAs. It interacts with LexA causing its activation and leading to its autocatalytic cleavage. In Gloeothece citriformis (strain PCC 7424) (Cyanothece sp. (strain PCC 7424)), this protein is Protein RecA.